A 278-amino-acid chain; its full sequence is MSVPTVLEKILARKAEEVAERSARVSLAELETLARAADAPRGFARALQDQVKLKQPAVIAEIKKASPSKGVIRENFVPADIAKSYEKGGATCLSVLTDVDYFQGADAYLQQARAACKLPVIRKDFMIDPYQIVEARALGADCVLLIVAALDDARMAELAAVAKGVGLDVLVEVHDGDELERALKTLDTPLVGVNNRNLHTFEVNLETTLDLLPRIPRERLVITESGILNRADVELMEISDVYSFLVGEAFMRAESPGSELQRLFFPERGVPVSGSTLD.

It belongs to the TrpC family.

The catalysed reaction is 1-(2-carboxyphenylamino)-1-deoxy-D-ribulose 5-phosphate + H(+) = (1S,2R)-1-C-(indol-3-yl)glycerol 3-phosphate + CO2 + H2O. The protein operates within amino-acid biosynthesis; L-tryptophan biosynthesis; L-tryptophan from chorismate: step 4/5. The chain is Indole-3-glycerol phosphate synthase from Pseudomonas fluorescens (strain ATCC BAA-477 / NRRL B-23932 / Pf-5).